A 401-amino-acid polypeptide reads, in one-letter code: MIYPGRGASLSVAVALVLFSSGAPWTFREEKEDVDREVCSESKIATTKYPCVKSTGEVTTCYRKKCCEGFKFVLGQCIPEDYDVCAGAPCEQQCTDHFGRVVCTCYDGYRYDRERHRNREKPYCLDIDECANNNETVCSQMCVNTPGSYRCDCHSGFYLEDDGKTCTKGERAPLFEKSDNVMKEGTCSATCEDFHQMKMTVLQLKQKMSLLSSNTEINKQMTNEKMMMTTNSFLPGPPGPPGPAGTPGAKGSSGSPGQMGPPGLPGPRGDMGPIGPSPDLSHIKQGRRGPVGPPGAPGRDGMKGERGFPGPSGPPGPPGSFDFLLLMMADIRNDIAELQSKVFSRPLHSSFEDFPSAPDSWRDTPENLDFGSGEDYKSQSPPKSSRKRKLPRNLKNPDWPV.

The N-terminal stretch at 1–22 (MIYPGRGASLSVAVALVLFSSG) is a signal peptide. The 42-residue stretch at 126 to 167 (DIDECANNNETVCSQMCVNTPGSYRCDCHSGFYLEDDGKTCT) folds into the EGF-like; calcium-binding domain. Intrachain disulfides connect C130-C142, C138-C151, and C153-C166. N-linked (GlcNAc...) asparagine glycosylation is present at N134. Disordered regions lie at residues 229-321 (TTNS…PGSF) and 344-401 (SRPL…DWPV). 2 Collagen-like domains span residues 234–276 (LPGP…PIGP) and 286–319 (GRRG…GPPG). Positions 235-244 (PGPPGPPGPA) are enriched in pro residues. Residues 246-258 (TPGAKGSSGSPGQ) show a composition bias toward low complexity.

It belongs to the CCBE1 family. In terms of tissue distribution, not expressed in blood or lymphatic endothelial cells, correlating spatially and temporally with the migration routes of endothelial cells that bud from the PCV, migrate in association with somite boundaries and seed the horizontal myoseptum region from where lymphatic precursors later migrate.

It is found in the secreted. In terms of biological role, required for lymphangioblast budding and angiogenic sprouting from venous endothelium during embryogenesis. Required for the formation of facial lymphatic structures. Necessary for lymphangiogenesis, but is probably not part of either the vegfc-vegfr3 signaling or sox18-prox1 transcriptional pathways. This is Collagen and calcium-binding EGF domain-containing protein 1 (ccbe1) from Danio rerio (Zebrafish).